We begin with the raw amino-acid sequence, 413 residues long: Histidine--tRNA ligase (413 aa).

Belongs to the class-II aminoacyl-tRNA synthetase family.

It localises to the cytoplasm. The catalysed reaction is tRNA(His) + L-histidine + ATP = L-histidyl-tRNA(His) + AMP + diphosphate + H(+). The sequence is that of Histidine--tRNA ligase from Methanosarcina acetivorans (strain ATCC 35395 / DSM 2834 / JCM 12185 / C2A).